The sequence spans 209 residues: uncharacterized protein (209 aa).

4Fe-4S ferredoxin-type domains follow at residues 38-67 (KTKP…IFSF), 63-92 (KIFS…KDRF), 90-119 (DRFT…KEIP), 122-151 (KTPV…EINP), 145-174 (INKE…TPDE), and 179-209 (LIVK…HRES). [4Fe-4S] cluster is bound by residues Cys47, Cys50, Cys53, Cys57, Cys72, Cys75, Cys78, Cys82, Cys99, Cys102, Cys105, and Cys109. [4Fe-4S] cluster is bound by residues Cys154, Cys157, Cys160, Cys164, Cys188, Cys191, Cys194, and Cys198.

This is an uncharacterized protein from Methanocaldococcus jannaschii (strain ATCC 43067 / DSM 2661 / JAL-1 / JCM 10045 / NBRC 100440) (Methanococcus jannaschii).